The primary structure comprises 601 residues: Sodium-dependent phosphate transport protein 2C (601 aa).

Over 1-75 (MPNSLAGDQV…HQVVSGFLKA (75 aa)) the chain is Cytoplasmic. Ser4 is subject to Phosphoserine. Residues 76–96 (CGLLGSLYFFICSLDILSSAF) form a helical membrane-spanning segment. Topologically, residues 97 to 110 (QLLGSKMAGDIFKD) are extracellular. A helical membrane pass occupies residues 111 to 131 (NVVLSNPVAGLVIGVVVTVLV). The Cytoplasmic portion of the chain corresponds to 132–187 (QSSSTSSSIVVSMVASKSLTVQASVPIIMGVNVGTSITSTLVSMAQSGDRDEFQRA). Residues 188–208 (FGGSAVHGIFNWLTVLVLLPL) traverse the membrane as a helical segment. Over 209–324 (ENATAALERL…FAGSELTDLA (116 aa)) the chain is Extracellular. Residues Asn210, Asn264, Asn267, and Asn299 are each glycosylated (N-linked (GlcNAc...) asparagine). A disulfide bridge connects residues Cys275 and Cys311. Residues 325–345 (VGFILLAGSLLVLCVCLVLIV) form a helical membrane-spanning segment. Topologically, residues 346-369 (KLLNSVLRGRIAQAVKTVINADFP) are cytoplasmic. Residues 370-390 (FPFGWLSGYLAILVGAGLTFL) traverse the membrane as a helical segment. The Extracellular portion of the chain corresponds to 391–447 (LQSSSVFTAAIVPLMGVGVINLERAYPLFLGSNIGTTTTALLAALASPADTLLFAVQ). A helical transmembrane segment spans residues 448–468 (VALIHFFFNLAGILLWYLVPV). At 469-487 (LRLPIPLAKRFGDLTAQYR) the chain is on the cytoplasmic side. Residues 488 to 508 (WVAIVYLLLTFLLLPLAAFGL) form a helical membrane-spanning segment. Residues 509-512 (SLAG) lie on the Extracellular side of the membrane. The chain crosses the membrane as a helical span at residues 513 to 533 (GSVLAAVGGPLVGLVLLIILV). At 534–601 (NVLQRHRPSW…NPQVIASQQL (68 aa)) the chain is on the cytoplasmic side.

The protein belongs to the SLC34A transporter family. Highly expressed in the kidney. Not found in any of the other tested tissues.

The protein localises to the apical cell membrane. It catalyses the reaction 2 Na(+)(out) + phosphate(out) = 2 Na(+)(in) + phosphate(in). In terms of biological role, involved in actively transporting phosphate into cells via Na(+) cotransport in the renal brush border membrane. The cotransport has a Na(+):Pi stoichiometry of 2:1 and is electroneutral. The polypeptide is Sodium-dependent phosphate transport protein 2C (Slc34a3) (Rattus norvegicus (Rat)).